The primary structure comprises 95 residues: UPF0473 protein PEPE_1260 (95 aa).

The protein belongs to the UPF0473 family.

This is UPF0473 protein PEPE_1260 from Pediococcus pentosaceus (strain ATCC 25745 / CCUG 21536 / LMG 10740 / 183-1w).